The primary structure comprises 358 residues: Leukotriene B4 receptor 2 (358 aa).

Over 1–24 (MSVCYRPPGNETLLSWKGSRATGT) the chain is Extracellular. Residue Asn-10 is glycosylated (N-linked (GlcNAc...) asparagine). A helical transmembrane segment spans residues 25–45 (AFLLLAALLGLPGNGFVVWSL). Residues 46 to 60 (AGWRPTAGRPLAATL) lie on the Cytoplasmic side of the membrane. The helical transmembrane segment at 61–81 (VLHLALADGAVLLLTPLFVAF) threads the bilayer. The Extracellular segment spans residues 82–96 (LSRQAWPLGQVGCKA). A helical membrane pass occupies residues 97–117 (VYYVCALSMYASVLLTGLLSL). Over 118 to 140 (QRCLAVTRPFLAPRLRSPALARR) the chain is Cytoplasmic. A helical membrane pass occupies residues 141–161 (LLLGVWLAALVLAVPAAVYRH). Residues 162-185 (LWGDRVCQLCHPSAVHAAAHLSLE) are Extracellular-facing. The chain crosses the membrane as a helical span at residues 186–206 (TLTAFVLPFGTVLGCYGVTLA). Residues 207–225 (RLRGARWGSGRQGTRVGRL) are Cytoplasmic-facing. The helical transmembrane segment at 226–246 (VSAIVLAFGLLWAPYHAVNLL) threads the bilayer. The Extracellular segment spans residues 247–275 (QAVAALAPPEGPLARLGGAGQAARAGTTA). Residues 276-296 (LAFFSSSVNPVLYVFTAGDLL) traverse the membrane as a helical segment. Over 297–358 (PRAGPRFLTR…GRMEKDSQEW (62 aa)) the chain is Cytoplasmic. The interval 315-358 (RVGSRSREGTMELRTTPRLKVVGQGRGYGDPGGGGRMEKDSQEW) is disordered. A compositionally biased stretch (gly residues) spans 338–349 (QGRGYGDPGGGG).

The protein belongs to the G-protein coupled receptor 1 family.

It is found in the cell membrane. Its function is as follows. Low-affinity receptor for leukotrienes including leukotriene B4. Mediates chemotaxis of granulocytes and macrophages. The response is mediated via G-proteins that activate a phosphatidylinositol-calcium second messenger system. The protein is Leukotriene B4 receptor 2 (Ltb4r2) of Rattus norvegicus (Rat).